The chain runs to 170 residues: Large ribosomal subunit protein uL22z (170 aa).

The protein belongs to the universal ribosomal protein uL22 family.

This is Large ribosomal subunit protein uL22z from Hordeum vulgare (Barley).